The primary structure comprises 437 residues: Eukaryotic peptide chain release factor subunit 1 (437 aa).

Q182 carries the post-translational modification N5-methylglutamine. Residue K331 forms a Glycyl lysine isopeptide (Lys-Gly) (interchain with G-Cter in ubiquitin) linkage. S421 carries the phosphoserine modification.

This sequence belongs to the eukaryotic release factor 1 family. Component of the eRF1-eRF3-GTP ternary complex, composed of SUP45/eRF1, SUP35/eRF3 and GTP. Interacts with TPA1. In terms of processing, N5-methylated on Gln-182 by MTQ2.

It is found in the cytoplasm. Its function is as follows. Component of the eRF1-eRF3-GTP ternary complex, a ternary complex that mediates translation termination in response to the termination codons. The eRF1-eRF3-GTP complex binds to a stop codon in the ribosomal A-site. SUP45/eRF1 is responsible for stop codon recognition and inducing hydrolysis of peptidyl-tRNA. Following GTP hydrolysis by SUP35/eRF3, SUP35/eRF3 dissociates, permitting SUP45/eRF1 to accommodate fully in the A-site and mediate hydrolysis of peptidyl-tRNA. The chain is Eukaryotic peptide chain release factor subunit 1 (SUP45) from Saccharomyces cerevisiae (strain ATCC 204508 / S288c) (Baker's yeast).